A 370-amino-acid chain; its full sequence is Heme A synthase (370 aa).

Helical transmembrane passes span 15–35 (VRIWLTLVAALIAVMVLVGGA), 104–124 (VIGIVYLLPFLWFLWRGAIGP), 129–149 (ALWIIFALGALQGAVGWWMVA), 161–181 (VRLATHLSLALIIYAAIVWTL), 200–220 (ALALLGLTFVQLYAGALVAGL), 261–280 (QFDHRMLAYALWTLAALHMI), 293–313 (GAVLLFLALTVQAALGIFTVL), and 317–337 (PIDLALAHQAMALVVLTLAVL). Residue histidine 264 participates in heme binding. Histidine 324 is a binding site for heme.

It belongs to the COX15/CtaA family. Type 2 subfamily. Interacts with CtaB. It depends on heme b as a cofactor.

It localises to the cell membrane. The enzyme catalyses Fe(II)-heme o + 2 A + H2O = Fe(II)-heme a + 2 AH2. Its pathway is porphyrin-containing compound metabolism; heme A biosynthesis; heme A from heme O: step 1/1. In terms of biological role, catalyzes the conversion of heme O to heme A by two successive hydroxylations of the methyl group at C8. The first hydroxylation forms heme I, the second hydroxylation results in an unstable dihydroxymethyl group, which spontaneously dehydrates, resulting in the formyl group of heme A. The polypeptide is Heme A synthase (Rhodopseudomonas palustris (strain TIE-1)).